The primary structure comprises 391 residues: Oocyte zinc finger protein XlCOF7.2 (391 aa).

C2H2-type zinc fingers lie at residues 284–306, 312–334, 340–362, and 368–391; these read FPCSECGKCFINQSTLARHYRTH, YPCSECGKCFASSTYLRDHRRIH, SSCSECGKYFLNCWSLARHHRTH, and YSCSECGKSFAISSDLAGHRRRTH.

It belongs to the krueppel C2H2-type zinc-finger protein family.

It is found in the nucleus. Functionally, may be involved in transcriptional regulation. The chain is Oocyte zinc finger protein XlCOF7.2 from Xenopus laevis (African clawed frog).